The following is a 584-amino-acid chain: Chaperonin GroEL 1 (584 aa).

Residues 29–32 (TIGP), 86–90 (DGTTT), Gly-413, and Asp-492 each bind ATP. The disordered stretch occupies residues 523-542 (EPEAAAPGGPGGDPMGGMGG). Positions 530–542 (GGPGGDPMGGMGG) are enriched in gly residues.

It belongs to the chaperonin (HSP60) family. Forms a cylinder of 14 subunits composed of two heptameric rings stacked back-to-back. Interacts with the co-chaperonin GroES.

The protein resides in the cytoplasm. The enzyme catalyses ATP + H2O + a folded polypeptide = ADP + phosphate + an unfolded polypeptide.. Its function is as follows. Together with its co-chaperonin GroES, plays an essential role in assisting protein folding. The GroEL-GroES system forms a nano-cage that allows encapsulation of the non-native substrate proteins and provides a physical environment optimized to promote and accelerate protein folding. This is Chaperonin GroEL 1 from Prochlorococcus marinus (strain MIT 9312).